The sequence spans 248 residues: GTP cyclohydrolase 1 type 2 homolog (248 aa).

5 residues coordinate a divalent metal cation: His-64, His-65, Asp-101, His-216, and Glu-220.

Belongs to the GTP cyclohydrolase I type 2/NIF3 family. As to quaternary structure, homohexamer.

This Borreliella burgdorferi (strain ATCC 35210 / DSM 4680 / CIP 102532 / B31) (Borrelia burgdorferi) protein is GTP cyclohydrolase 1 type 2 homolog.